The primary structure comprises 155 residues: Transcriptional repressor NrdR (155 aa).

Residues 3 to 34 (CPFCGHSNTQVLDTRMSEDGDAVRRRRRCEAC) fold into a zinc finger. An ATP-cone domain is found at 49–139 (PAIVKKNGSR…VYRSFEDVSE (91 aa)).

This sequence belongs to the NrdR family. Zn(2+) is required as a cofactor.

Functionally, negatively regulates transcription of bacterial ribonucleotide reductase nrd genes and operons by binding to NrdR-boxes. In Cupriavidus necator (strain ATCC 17699 / DSM 428 / KCTC 22496 / NCIMB 10442 / H16 / Stanier 337) (Ralstonia eutropha), this protein is Transcriptional repressor NrdR.